Reading from the N-terminus, the 98-residue chain is Cystatin-A (98 aa).

Residue Met-1 is modified to N-acetylmethionine. The Secondary area of contact signature appears at 46–50 (QVVAG).

Belongs to the cystatin family. As to expression, expressed in the skin throughout the epidermis.

Its subcellular location is the cytoplasm. This is an intracellular thiol proteinase inhibitor. Has an important role in desmosome-mediated cell-cell adhesion in the lower levels of the epidermis. The chain is Cystatin-A (CSTA) from Homo sapiens (Human).